The sequence spans 205 residues: Outer-membrane lipoprotein carrier protein (205 aa).

The first 21 residues, 1–21, serve as a signal peptide directing secretion; sequence MRFLAVATMVVALMVPWSVRA.

Belongs to the LolA family. In terms of assembly, monomer.

It is found in the periplasm. Its function is as follows. Participates in the translocation of lipoproteins from the inner membrane to the outer membrane. Only forms a complex with a lipoprotein if the residue after the N-terminal Cys is not an aspartate (The Asp acts as a targeting signal to indicate that the lipoprotein should stay in the inner membrane). In Methylobacillus flagellatus (strain ATCC 51484 / DSM 6875 / VKM B-1610 / KT), this protein is Outer-membrane lipoprotein carrier protein.